Here is a 161-residue protein sequence, read N- to C-terminus: Stress response protein YvgO (161 aa).

Residues 1-26 (MKRIRIPMTLALGAALTIAPLSFASA) form the signal peptide.

This Bacillus subtilis (strain 168) protein is Stress response protein YvgO (yvgO).